A 409-amino-acid polypeptide reads, in one-letter code: MSMMLSNWALSPRYVGQRNLIHCTTLFHTLTRWAKDADDKYHDINSMYENMFTPSNDNVSILQDEGKSDYDTTKASSMEEDISAFNKDLYNFYNIGYAKQIMSASQLENIVKAKGRFVIQSLSTSPYYNLALENYVFKNTPRAKRGPDNCRLLFYINDRCAVIGKNQNLWQEVDLAKLKSKNFELLRRFSGGGTVLHDLGNVNYSYLTSREKFETKFFNKMIIKWLNSLNPELRLDLNERGDIIQDGFKISGSAYKIAGGKAYHHATMLLNADLEQFSGLLEPSLPNNMEWESSGVHSVKSKIKNVGIITPNQFIAVVSERFQKTFKVDGEIPIYYCDEFKSINDEIKDAMNTLQSEQWKYFSGPKFSVKIKDKGLTIKVEKGMIYDCDRNDLIGLEFKGFLENIDSYT.

A BPL/LPL catalytic domain is found at 146-330; that stretch reads GPDNCRLLFY…RFQKTFKVDG (185 aa). Residues Arg-188, 193–196, and Lys-249 contribute to the ATP site; that span reads GTVL. Position 249 (Lys-249) interacts with (R)-lipoate.

The protein belongs to the LplA family. Monomer.

The catalysed reaction is L-lysyl-[lipoyl-carrier protein] + (R)-lipoate + ATP = N(6)-[(R)-lipoyl]-L-lysyl-[lipoyl-carrier protein] + AMP + diphosphate + H(+). It functions in the pathway protein modification; protein lipoylation via exogenous pathway; protein N(6)-(lipoyl)lysine from lipoate: step 1/2. It participates in protein modification; protein lipoylation via exogenous pathway; protein N(6)-(lipoyl)lysine from lipoate: step 2/2. Functionally, catalyzes both the ATP-dependent activation of exogenously supplied lipoate to lipoyl-AMP and the transfer of the activated lipoyl onto the lipoyl domains of lipoate-dependent enzymes. The protein is Putative lipoate-protein ligase A (AIM22) of Saccharomyces cerevisiae (strain ATCC 204508 / S288c) (Baker's yeast).